The following is a 334-amino-acid chain: 4-hydroxyproline 2-epimerase (334 aa).

Cys90 (proton acceptor) is an active-site residue. Residues Gly91–His92, His223, and Asp249 contribute to the substrate site. The active-site Proton donor is the Cys253. Gly254–Thr255 provides a ligand contact to substrate.

Belongs to the proline racemase family. As to quaternary structure, homodimer.

The enzyme catalyses trans-4-hydroxy-L-proline = cis-4-hydroxy-D-proline. In terms of biological role, catalyzes the epimerization of trans-4-hydroxy-L-proline (t4LHyp) to cis-4-hydroxy-D-proline (c4DHyp). Is likely involved in a degradation pathway that converts t4LHyp to alpha-ketoglutarate, which would allow P.denitrificans to grow on t4LHyp as a sole carbon source. Also seems to be involved in an alternative catabolic pathway that degrades trans-4-hydroxy-L-proline betaine (tHyp-B) to alpha-ketoglutarate; this pathway would permit the utilization of tHyp-B as a sole carbon and nitrogen source. The protein is 4-hydroxyproline 2-epimerase (hypF) of Paracoccus denitrificans (strain Pd 1222).